Reading from the N-terminus, the 426-residue chain is Target of rapamycin complex 2 subunit AVO2 (426 aa).

5 ANK repeats span residues 4 to 33 (EPSVRLREAIIEGNLLIVKRLLRRNPDLLT), 39 to 68 (NGWSSLHYASYHGRYLICVYLIQLGHDKHE), 74 to 104 (KGNTCVHLALMKGHEQTLHLLLQQFPRFINH), 108 to 137 (NGRAPIHIACMNDYYQCLSLLIGVGADLWV), and 141 to 171 (NGDTPLHVCLEYGSISCMKMLLNEGEVSLDD). Positions 259 to 302 (STHTTSGNGGNRRSSITNPVFNPRKPTLSTDSFSSSSNSSSRLR) are disordered. Residues 260-278 (THTTSGNGGNRRSSITNPV) show a composition bias toward polar residues. Residues 285-302 (TLSTDSFSSSSNSSSRLR) show a composition bias toward low complexity. Phosphoserine occurs at positions 315 and 350. Polar residues predominate over residues 350–359 (SNDNVRGDSQ). The interval 350-392 (SNDNVRGDSQTATINDDGGGGNGGDATIGMGLRKDPDDENENK) is disordered. A compositionally biased stretch (gly residues) spans 366–375 (DGGGGNGGDA). Over residues 381–392 (LRKDPDDENENK) the composition is skewed to basic and acidic residues.

As to quaternary structure, the target of rapamycin complex 2 (TORC2) is composed of at least AVO1, AVO2, BIT61, LST8, TOR2 and TSC11. TORC2 forms a homodimer. Contrary to TORC1, TORC2 does not bind to and is not sensitive to FKBP-rapamycin. AVO2 is peripherally associated to AVO1 and TSC11.

Its subcellular location is the cell membrane. The protein resides in the vacuole membrane. In terms of biological role, component of TORC2, which regulates cell cycle-dependent polarization of the actin-cytoskeleton and cell wall integrity. TORC2 controls polarity of the actin cytoskeleton, which is required for orienting the secretory pathway toward discrete growth sites, via the RHO1/PKC1/MAPK cell integrity pathway. This Saccharomyces cerevisiae (strain ATCC 204508 / S288c) (Baker's yeast) protein is Target of rapamycin complex 2 subunit AVO2 (AVO2).